The chain runs to 472 residues: Levansucrase (472 aa).

An N-terminal signal peptide occupies residues 1-29; that stretch reads MNIKKIVKQATVLTFTTALLAGGATQAFA. Sucrose is bound by residues W85, D86, and S164. D86 serves as the catalytic Nucleophile. D241 is a Ca(2+) binding site. R246 and D247 together coordinate sucrose. Ca(2+)-binding residues include Q272, L308, N310, and D339. E340 contacts sucrose. E342 functions as the Proton donor/acceptor in the catalytic mechanism. R360 contacts sucrose.

The protein belongs to the glycosyl hydrolase 68 family.

It is found in the secreted. It catalyses the reaction [6)-beta-D-fructofuranosyl-(2-&gt;](n) alpha-D-glucopyranoside + sucrose = [6)-beta-D-fructofuranosyl-(2-&gt;](n+1) alpha-D-glucopyranoside + D-glucose. With respect to regulation, ca(2+) may play an important structural role and promote stability of levansucrase. Functionally, catalyzes the synthesis of levan, a fructose polymer, by transferring the fructosyl moiety from sucrose to a growing acceptor molecule. Also displays sucrose hydrolase activity. The sequence is that of Levansucrase from Bacillus amyloliquefaciens (Bacillus velezensis).